The following is a 154-amino-acid chain: Myoglobin (154 aa).

The Globin domain occupies 2–148 (GLSDDEWNHV…FRNDMASKYK (147 aa)). His65 is a binding site for nitrite. Position 65 (His65) interacts with O2. His94 contributes to the heme b binding site.

Belongs to the globin family. Monomeric.

It is found in the cytoplasm. The protein localises to the sarcoplasm. The catalysed reaction is Fe(III)-heme b-[protein] + nitric oxide + H2O = Fe(II)-heme b-[protein] + nitrite + 2 H(+). The enzyme catalyses H2O2 + AH2 = A + 2 H2O. Its function is as follows. Monomeric heme protein which primary function is to store oxygen and facilitate its diffusion within muscle tissues. Reversibly binds oxygen through a pentacoordinated heme iron and enables its timely and efficient release as needed during periods of heightened demand. Depending on the oxidative conditions of tissues and cells, and in addition to its ability to bind oxygen, it also has a nitrite reductase activity whereby it regulates the production of bioactive nitric oxide. Under stress conditions, like hypoxia and anoxia, it also protects cells against reactive oxygen species thanks to its pseudoperoxidase activity. The protein is Myoglobin (MB) of Caretta caretta (Loggerhead sea turtle).